The following is a 323-amino-acid chain: uncharacterized protein (323 aa).

The TIR domain occupies 1–142 (MPSVFFSYSH…QVAKAVREAA (142 aa)).

This is an uncharacterized protein from Sinorhizobium fredii (strain NBRC 101917 / NGR234).